The sequence spans 92 residues: Small ribosomal subunit protein uS19 (92 aa).

It belongs to the universal ribosomal protein uS19 family.

In terms of biological role, protein S19 forms a complex with S13 that binds strongly to the 16S ribosomal RNA. The chain is Small ribosomal subunit protein uS19 from Polaromonas naphthalenivorans (strain CJ2).